The primary structure comprises 371 residues: DNA repair protein RAD14 (371 aa).

Residues 26–48 (LSSDQLNRIESRNEPLKTRPLAV) are disordered. The segment covering 32–42 (NRIESRNEPLK) has biased composition (basic and acidic residues). Cys-191, Cys-194, Cys-213, and Cys-216 together coordinate Zn(2+). Residues 191-216 (CIECHINIEMDPVLHDVFKLQVCKQC) fold into a zinc finger.

Belongs to the XPA family. In terms of assembly, two monomers bind to kinked/damaged DNA (construct with only the C-terminal DNA-binding domain). Component of the nucleotide excision repair factor 1 (NEF1) complex consisting of RAD1, RAD10 and RAD14.

The protein resides in the nucleus. Functionally, involved in nucleotide excision repair. Binds specifically to damaged DNA. Required for the incision step. This chain is DNA repair protein RAD14 (RAD14), found in Saccharomyces cerevisiae (strain ATCC 204508 / S288c) (Baker's yeast).